Here is a 122-residue protein sequence, read N- to C-terminus: Large ribosomal subunit protein uL14 (122 aa).

This sequence belongs to the universal ribosomal protein uL14 family. In terms of assembly, part of the 50S ribosomal subunit. Forms a cluster with proteins L3 and L19. In the 70S ribosome, L14 and L19 interact and together make contacts with the 16S rRNA in bridges B5 and B8.

Binds to 23S rRNA. Forms part of two intersubunit bridges in the 70S ribosome. The polypeptide is Large ribosomal subunit protein uL14 (Christiangramia forsetii (strain DSM 17595 / CGMCC 1.15422 / KT0803) (Gramella forsetii)).